A 193-amino-acid polypeptide reads, in one-letter code: ATP-dependent Clp protease proteolytic subunit (193 aa).

Catalysis depends on Ser97, which acts as the Nucleophile. His122 is an active-site residue.

Belongs to the peptidase S14 family. In terms of assembly, fourteen ClpP subunits assemble into 2 heptameric rings which stack back to back to give a disk-like structure with a central cavity, resembling the structure of eukaryotic proteasomes.

The protein localises to the cytoplasm. The enzyme catalyses Hydrolysis of proteins to small peptides in the presence of ATP and magnesium. alpha-casein is the usual test substrate. In the absence of ATP, only oligopeptides shorter than five residues are hydrolyzed (such as succinyl-Leu-Tyr-|-NHMec, and Leu-Tyr-Leu-|-Tyr-Trp, in which cleavage of the -Tyr-|-Leu- and -Tyr-|-Trp bonds also occurs).. In terms of biological role, cleaves peptides in various proteins in a process that requires ATP hydrolysis. Has a chymotrypsin-like activity. Plays a major role in the degradation of misfolded proteins. The chain is ATP-dependent Clp protease proteolytic subunit from Fusobacterium nucleatum subsp. nucleatum (strain ATCC 25586 / DSM 15643 / BCRC 10681 / CIP 101130 / JCM 8532 / KCTC 2640 / LMG 13131 / VPI 4355).